A 98-amino-acid polypeptide reads, in one-letter code: Cystatin-A (98 aa).

Met1 bears the N-acetylmethionine mark. Residues Gln46–Gly50 carry the Secondary area of contact motif.

It belongs to the cystatin family.

The protein resides in the cytoplasm. Functionally, this is an intracellular thiol proteinase inhibitor. The chain is Cystatin-A (CSTA) from Felis catus (Cat).